The chain runs to 419 residues: Caspase-12 (419 aa).

A CARD domain is found at 1 to 92 (MAARRTHERD…QLSLQFSNDE (92 aa)). S85 carries the phosphoserine modification. The segment at 88–113 (FSNDEDDGPQKICTPSSPSESKRKVE) is disordered. Catalysis depends on residues H250 and C298.

The protein belongs to the peptidase C14A family. In terms of assembly, heterotetramer that consists of two anti-parallel arranged heterodimers, each one formed by two subunits (Potential). Interacts with TRAF2 under resting conditions; this interaction is reduced in ER stress conditions. Mainly expressed in skeletal muscle and lung.

Involved in the activation cascade of caspases responsible for apoptosis execution. This Mus musculus (Mouse) protein is Caspase-12 (Casp12).